The primary structure comprises 212 residues: RING-H2 finger protein ATL68 (212 aa).

A helical transmembrane segment spans residues 24-44 (LGLGYSIAIALGFLVLISTII). An RING-type; atypical zinc finger spans residues 136–178 (CSICLCEYMEEEMLRMMPECKHYFHVYCLDAWLKLNGSCPVCR). The tract at residues 182 to 212 (LPTPQSTPQSTPLSEVVPLSQYAADRRRSRR) is disordered. Positions 185 to 195 (PQSTPQSTPLS) are enriched in low complexity.

The protein belongs to the RING-type zinc finger family. ATL subfamily.

The protein localises to the membrane. It catalyses the reaction S-ubiquitinyl-[E2 ubiquitin-conjugating enzyme]-L-cysteine + [acceptor protein]-L-lysine = [E2 ubiquitin-conjugating enzyme]-L-cysteine + N(6)-ubiquitinyl-[acceptor protein]-L-lysine.. Its pathway is protein modification; protein ubiquitination. This is RING-H2 finger protein ATL68 (ATL68) from Arabidopsis thaliana (Mouse-ear cress).